Reading from the N-terminus, the 2643-residue chain is BAH and coiled-coil domain-containing protein 1 (2643 aa).

Disordered stretches follow at residues 23–45 (SAAA…HFQP) and 84–106 (SAAS…RGSH). Lys-220 bears the N6-acetyllysine mark. Basic and acidic residues-rich tracts occupy residues 224 to 249 (KEKV…DRQK) and 683 to 702 (ERPD…DGEV). Disordered regions lie at residues 224 to 273 (KEKV…SCEG), 674 to 704 (PATK…EVRQ), 721 to 758 (GRPD…LESE), 985 to 1023 (RKPE…PSSA), and 1038 to 1299 (TLKT…KALP). Positions 985-1003 (RKPEDRHMELEEAAQEKTP) are enriched in basic and acidic residues. Residues 1133 to 1149 (RPEPPRTFLPGEPPPCS) show a composition bias toward pro residues. The span at 1210 to 1224 (ATGQTNSTQGGMQNE) shows a compositional bias: polar residues. The span at 1269 to 1284 (QEEETQLEESGGDSEV) shows a compositional bias: acidic residues. Coiled-coil stretches lie at residues 1346 to 1373 (ALLS…DVLA) and 1437 to 1486 (LKAA…SSRS). A compositionally biased stretch (basic and acidic residues) spans 1466 to 1484 (QRELARLQRRHDHEREESS). Disordered stretches follow at residues 1466 to 1520 (QREL…DSKK), 1537 to 1559 (GDEP…QSVS), 1604 to 1641 (KEAA…GREM), 1746 to 1781 (RAPG…SRDT), 1875 to 1896 (FDED…GVQL), 2055 to 2124 (SSCR…HFLG), 2322 to 2341 (CPSS…TGVP), and 2349 to 2386 (SMSS…SDDE). Residues 1487-1501 (PARRGPGRPRKRKHS) are compositionally biased toward basic residues. Residues 1631 to 1641 (PHPDGDSGREM) show a composition bias toward basic and acidic residues. Basic residues predominate over residues 1757–1767 (GKKKAKGKVKT). The segment covering 1875–1892 (FDEDDTSFSDEEEEEEEA) has biased composition (acidic residues). The span at 2349–2374 (SMSSSSSGSSTSSSSGSVSTSSLCSS) shows a compositional bias: low complexity. The segment covering 2375 to 2386 (DNEDSSYSSDDE) has biased composition (acidic residues). Residues 2517 to 2637 (ETLRIGDCAV…PTTGRLVTAD (121 aa)) enclose the BAH domain.

The sequence is that of BAH and coiled-coil domain-containing protein 1 (Bahcc1) from Mus musculus (Mouse).